The primary structure comprises 300 residues: Protoheme IX farnesyltransferase (300 aa).

The next 8 membrane-spanning stretches (helical) occupy residues 24-44, 46-66, 94-114, 118-138, 146-166, 172-192, 224-244, and 278-298; these read VTQLAVFCAVIGMFLATPGMV, WHVLIGGTIGIWLLAGAAFAI, PQILLFSAVLGSAGAWTLYTF, LTMWLTIATFVGYAVVYTLLL, IVIGGASGAMPPALGWAAVTG, AWILVLIIFVWTPPHFWVLAL, VILFAVTLMPFISGMSGVVYL, and IVYLSLLFAALLVDHYARPLL.

It belongs to the UbiA prenyltransferase family. Protoheme IX farnesyltransferase subfamily.

The protein localises to the cell inner membrane. The catalysed reaction is heme b + (2E,6E)-farnesyl diphosphate + H2O = Fe(II)-heme o + diphosphate. It functions in the pathway porphyrin-containing compound metabolism; heme O biosynthesis; heme O from protoheme: step 1/1. In terms of biological role, converts heme B (protoheme IX) to heme O by substitution of the vinyl group on carbon 2 of heme B porphyrin ring with a hydroxyethyl farnesyl side group. In Burkholderia ambifaria (strain MC40-6), this protein is Protoheme IX farnesyltransferase.